The chain runs to 150 residues: Large ribosomal subunit protein bL9 (150 aa).

Belongs to the bacterial ribosomal protein bL9 family.

Binds to the 23S rRNA. This is Large ribosomal subunit protein bL9 from Renibacterium salmoninarum (strain ATCC 33209 / DSM 20767 / JCM 11484 / NBRC 15589 / NCIMB 2235).